The sequence spans 65 residues: Neuropeptide-like protein 28 (65 aa).

A signal peptide spans 1 to 22 (MISTSSILILVFLLACFMATSA). Residues Tyr-29, Tyr-39, Tyr-47, and Tyr-55 each carry the tyrosine amide modification. Trp-63 is modified (tryptophan amide).

This sequence belongs to the YARP (YGGW-amide related peptide) family.

The protein localises to the secreted. Functionally, may have antimicrobial activity. In Caenorhabditis elegans, this protein is Neuropeptide-like protein 28 (nlp-28).